We begin with the raw amino-acid sequence, 158 residues long: MLLTHLNEENQPKMVDIGDKETTERIALASGRISMNKEAYDAIVNHCVKKGPVLQTAIIAGIMGAKKTSELIPMCHSIMLNGVDIDILEEKETCSFKLYARVKTQAKTGVEMEALMSVSIGLLTIYDMVKAIDKSMTISGVMLEHKSGGKSGDYNAKK.

Residues 74-76 (MCH) and 112-113 (ME) contribute to the substrate site. D127 is an active-site residue.

The protein belongs to the MoaC family. As to quaternary structure, homohexamer; trimer of dimers.

The catalysed reaction is (8S)-3',8-cyclo-7,8-dihydroguanosine 5'-triphosphate = cyclic pyranopterin phosphate + diphosphate. It participates in cofactor biosynthesis; molybdopterin biosynthesis. Catalyzes the conversion of (8S)-3',8-cyclo-7,8-dihydroguanosine 5'-triphosphate to cyclic pyranopterin monophosphate (cPMP). The chain is Cyclic pyranopterin monophosphate synthase from Helicobacter pylori (strain P12).